The following is a 582-amino-acid chain: Mitogen-activated protein kinase 17 (582 aa).

Positions 22 to 61 (SSSFHLTTTGDDTVKDLHDPRREDAEGDGWEEVHEGPESD) are disordered. Residues 33–45 (DTVKDLHDPRRED) are compositionally biased toward basic and acidic residues. The Protein kinase domain maps to 105–396 (YKVSEVIGKG…AEEALTDPYF (292 aa)). Residues 111 to 119 (IGKGSYGVV) and Lys-134 contribute to the ATP site. Asp-231 functions as the Proton acceptor in the catalytic mechanism. The residue at position 267 (Thr-267) is a Phosphothreonine. The TXY motif lies at 267–269 (TDY). Tyr-269 carries the post-translational modification Phosphotyrosine. Disordered stretches follow at residues 474 to 502 (EGVSKGEKSSPQLRQNASLPRERAIGNKH) and 542 to 582 (ISAS…QLKT). Over residues 482 to 491 (SSPQLRQNAS) the composition is skewed to polar residues. A compositionally biased stretch (basic and acidic residues) spans 493 to 502 (PRERAIGNKH). The segment covering 557-572 (DQEDSLTESMDETADE) has biased composition (acidic residues).

This sequence belongs to the protein kinase superfamily. CMGC Ser/Thr protein kinase family. MAP kinase subfamily. Post-translationally, dually phosphorylated on Thr-267 and Tyr-269, which activates the enzyme.

It carries out the reaction L-seryl-[protein] + ATP = O-phospho-L-seryl-[protein] + ADP + H(+). It catalyses the reaction L-threonyl-[protein] + ATP = O-phospho-L-threonyl-[protein] + ADP + H(+). Its activity is regulated as follows. Activated by threonine and tyrosine phosphorylation. The chain is Mitogen-activated protein kinase 17 (MPK17) from Oryza sativa subsp. japonica (Rice).